We begin with the raw amino-acid sequence, 191 residues long: UPF0149 protein VC_2476 (191 aa).

The protein belongs to the UPF0149 family.

The protein is UPF0149 protein VC_2476 of Vibrio cholerae serotype O1 (strain ATCC 39315 / El Tor Inaba N16961).